The chain runs to 250 residues: Putative ABC transporter ATP-binding protein YjkB (250 aa).

The ABC transporter domain maps to 13-245; sequence ISFRSVRKSY…PQHEAAKEFL (233 aa). Position 49-56 (49-56) interacts with ATP; the sequence is GPSGSGKS.

The protein belongs to the ABC transporter superfamily.

The polypeptide is Putative ABC transporter ATP-binding protein YjkB (yjkB) (Bacillus subtilis (strain 168)).